The sequence spans 755 residues: Catalase-peroxidase (755 aa).

Positions 91-245 (WHSAGTYRTA…LAAVQMGLIY (155 aa)) form a cross-link, tryptophyl-tyrosyl-methioninium (Trp-Tyr) (with M-271). The active-site Proton acceptor is His92. The tract at residues 193–229 (DNRYGKDPESMQPPGEGTLVAEPAEHGNEESRTNQGE) is disordered. The span at 215-224 (PAEHGNEESR) shows a compositional bias: basic and acidic residues. Positions 245–271 (YVNPEGPEGNPDPVASAKDIRETFGRM) form a cross-link, tryptophyl-tyrosyl-methioninium (Tyr-Met) (with W-91). His286 contacts heme.

Belongs to the peroxidase family. Peroxidase/catalase subfamily. Homodimer or homotetramer. Requires heme b as cofactor. Formation of the three residue Trp-Tyr-Met cross-link is important for the catalase, but not the peroxidase activity of the enzyme.

The catalysed reaction is H2O2 + AH2 = A + 2 H2O. It carries out the reaction 2 H2O2 = O2 + 2 H2O. Functionally, bifunctional enzyme with both catalase and broad-spectrum peroxidase activity. The polypeptide is Catalase-peroxidase (Pseudomonas fluorescens (strain Pf0-1)).